The chain runs to 86 residues: Putative pro-MCH-like protein 2 (86 aa).

An NGE-like region spans residues 31–49; it reads GSVAFPAENGVQDTESTLE. The disordered stretch occupies residues 40–60; the sequence is GVQDTESTLEKRETGDEENSA. Residues 52–64 form an NEI-like region; it reads ETGDEENSAKFPI. A melanin-concentrating hormone-like region spans residues 68 to 86; it reads DFDTLRCMLGRVYQRCWQV.

The protein belongs to the melanin-concentrating hormone family. As to expression, expressed in testis but not in brain.

The chain is Putative pro-MCH-like protein 2 (PMCHL2) from Homo sapiens (Human).